We begin with the raw amino-acid sequence, 173 residues long: NADH-quinone oxidoreductase subunit I 2 (173 aa).

4Fe-4S ferredoxin-type domains lie at 41–73 (IVLT…LAKA) and 83–112 (EYFR…LTPD). [4Fe-4S] cluster contacts are provided by cysteine 53, cysteine 56, cysteine 59, cysteine 63, cysteine 92, cysteine 95, cysteine 98, and cysteine 102. Residues 153–163 (GKDKGEAEHEA) show a composition bias toward basic and acidic residues. Positions 153–173 (GKDKGEAEHEAPPVNLKGLLP) are disordered.

This sequence belongs to the complex I 23 kDa subunit family. NDH-1 is composed of 14 different subunits. Subunits NuoA, H, J, K, L, M, N constitute the membrane sector of the complex. It depends on [4Fe-4S] cluster as a cofactor.

It localises to the cell inner membrane. It carries out the reaction a quinone + NADH + 5 H(+)(in) = a quinol + NAD(+) + 4 H(+)(out). Functionally, NDH-1 shuttles electrons from NADH, via FMN and iron-sulfur (Fe-S) centers, to quinones in the respiratory chain. The immediate electron acceptor for the enzyme in this species is believed to be ubiquinone. Couples the redox reaction to proton translocation (for every two electrons transferred, four hydrogen ions are translocated across the cytoplasmic membrane), and thus conserves the redox energy in a proton gradient. The polypeptide is NADH-quinone oxidoreductase subunit I 2 (Rhodopseudomonas palustris (strain ATCC BAA-98 / CGA009)).